A 171-amino-acid polypeptide reads, in one-letter code: CASP-like protein 1C3 (171 aa).

At Met1–Arg6 the chain is on the cytoplasmic side. A helical membrane pass occupies residues Leu7–Met27. The Extracellular segment spans residues Ala28–Lys52. Residues Tyr53–Ser73 traverse the membrane as a helical segment. Residues Glu74 to Arg79 lie on the Cytoplasmic side of the membrane. Residues Leu80–Leu100 form a helical membrane-spanning segment. Over Ala101–Thr130 the chain is Extracellular. Asn110 is a glycosylation site (N-linked (GlcNAc...) asparagine). A helical transmembrane segment spans residues Gly131–Ile151. Topologically, residues Tyr152–Ile171 are cytoplasmic.

It belongs to the Casparian strip membrane proteins (CASP) family. Homodimer and heterodimers.

The protein resides in the cell membrane. This is CASP-like protein 1C3 from Populus trichocarpa (Western balsam poplar).